An 804-amino-acid polypeptide reads, in one-letter code: Phenylalanine--tRNA ligase beta subunit (804 aa).

In terms of domain architecture, tRNA-binding spans 40-155; that stretch reads DRGMKGVVIG…SDAPIGADAI (116 aa). Residues 409–484 enclose the B5 domain; the sequence is QDSVVVTVTL…RLYGYDRLPA (76 aa). The Mg(2+) site is built by Asp-462, Asp-468, Glu-471, and Glu-472. Residues 710–803 form the FDX-ACB domain; that stretch reads PRFPSVVRDI…VEKQFGAVLR (94 aa).

Belongs to the phenylalanyl-tRNA synthetase beta subunit family. Type 1 subfamily. As to quaternary structure, tetramer of two alpha and two beta subunits. Mg(2+) serves as cofactor.

Its subcellular location is the cytoplasm. It catalyses the reaction tRNA(Phe) + L-phenylalanine + ATP = L-phenylalanyl-tRNA(Phe) + AMP + diphosphate + H(+). The polypeptide is Phenylalanine--tRNA ligase beta subunit (Geobacillus kaustophilus (strain HTA426)).